The chain runs to 402 residues: BTB and MATH domain-containing protein 40 (402 aa).

Residues 1-25 (MSDRHLYGSDHSYLSSKPSCSSCRR) are disordered. Over residues 15–25 (SSKPSCSSCRR) the composition is skewed to low complexity. An MATH domain is found at 43–177 (VLTQRWTVCN…DKSLVISCHI (135 aa)). Positions 222–295 (TDMTIVAGPL…IYAGVIKSDI (74 aa)) constitute a BTB domain.

As to quaternary structure, interacts with cul-3.

The protein operates within protein modification; protein ubiquitination. Its function is as follows. Probable substrate-specific adapter of an E3 ubiquitin-protein ligase complex which mediates the ubiquitination and subsequent proteasomal degradation of target proteins. This Caenorhabditis elegans protein is BTB and MATH domain-containing protein 40 (bath-40).